The primary structure comprises 250 residues: tRNA (guanine-N(1)-)-methyltransferase (250 aa).

S-adenosyl-L-methionine contacts are provided by residues Gly-113 and 134-139 (IGDYVL).

The protein belongs to the RNA methyltransferase TrmD family. As to quaternary structure, homodimer.

It is found in the cytoplasm. It carries out the reaction guanosine(37) in tRNA + S-adenosyl-L-methionine = N(1)-methylguanosine(37) in tRNA + S-adenosyl-L-homocysteine + H(+). In terms of biological role, specifically methylates guanosine-37 in various tRNAs. In Buchnera aphidicola subsp. Baizongia pistaciae (strain Bp), this protein is tRNA (guanine-N(1)-)-methyltransferase.